We begin with the raw amino-acid sequence, 390 residues long: Protein NDRG4-A (390 aa).

The disordered stretch occupies residues 356 to 390 (LTSASSVDGSRPRPCTQSESSDGIGQINHTMEVSC). Over residues 370-390 (CTQSESSDGIGQINHTMEVSC) the composition is skewed to polar residues.

The protein belongs to the NDRG family.

The protein resides in the cytoplasm. Its subcellular location is the cytosol. Its function is as follows. Contributes to the maintenance of intracerebral BDNF levels within the normal range. May enhance growth factor-induced ERK1 and ERK2 phosphorylation. May attenuate growth factor-promoted ELK1 phosphorylation in a microtubule-dependent manner. In Xenopus laevis (African clawed frog), this protein is Protein NDRG4-A (ndrg4-a).